A 223-amino-acid polypeptide reads, in one-letter code: N-acetylmuramic acid 6-phosphate phosphatase (223 aa).

The active-site Nucleophile is D9. Residues D9, D11, and D168 each contribute to the Mg(2+) site. The active-site Proton donor is the D11.

Belongs to the HAD-like hydrolase superfamily. CbbY/CbbZ/Gph/YieH family. Phosphatase MupP subfamily. Requires Mg(2+) as cofactor.

It carries out the reaction N-acetyl-D-muramate 6-phosphate + H2O = N-acetyl-D-muramate + phosphate. Its pathway is cell wall biogenesis; peptidoglycan recycling. Its function is as follows. Specifically catalyzes the dephosphorylation of N-acetylmuramate 6-phosphate (MurNAc-6P) to MurNac. Is involved in peptidoglycan recycling as part of a cell wall recycling pathway that bypasses de novo biosynthesis of the peptidoglycan precursor UDP-MurNAc. Plays a role in intrinsic resistance to fosfomycin, which targets the de novo synthesis of UDP-MurNAc. Shows a very low activity on GlcNAc-6P, and neither alpha-1-phosphorylated MurNAc, GlcNAc, or glucose nor glucosamine-6P or glucose-6P can be used as a substrate. The polypeptide is N-acetylmuramic acid 6-phosphate phosphatase (Pseudomonas putida (strain ATCC 47054 / DSM 6125 / CFBP 8728 / NCIMB 11950 / KT2440)).